The chain runs to 200 residues: Small ribosomal subunit protein eS1 (200 aa).

Belongs to the eukaryotic ribosomal protein eS1 family.

This is Small ribosomal subunit protein eS1 from Thermococcus onnurineus (strain NA1).